Consider the following 115-residue polypeptide: Tail tip protein M (115 aa).

The protein belongs to the lambda-like tail tip protein M family.

The protein resides in the virion. Its subcellular location is the host cytoplasm. Its function is as follows. Part of the distal tail tip which plays a role in DNA ejection during entry, and in tail assembly initiation during exit. May bind tail tip complex associated with tape measure protein and allow tail tube protein polymerization on top of tail tip. The polypeptide is Tail tip protein M (Escherichia coli (Bacteriophage N15)).